Reading from the N-terminus, the 274-residue chain is Type II restriction enzyme HgiBI (274 aa).

This sequence belongs to the TdeIII type II restriction endonuclease family.

It carries out the reaction Endonucleolytic cleavage of DNA to give specific double-stranded fragments with terminal 5'-phosphates.. Its function is as follows. A P subtype restriction enzyme that recognizes the double-stranded sequence 5'-GGWCC-3' and cleaves after G-1. This system is less active than isoschizomeric RM.HgiEI. In Herpetosiphon aurantiacus (Herpetosiphon giganteus), this protein is Type II restriction enzyme HgiBI.